The following is a 178-amino-acid chain: NADH-quinone oxidoreductase subunit I 2 (178 aa).

4Fe-4S ferredoxin-type domains lie at isoleucine 46–alanine 78 and alanine 88–phenylalanine 117. The [4Fe-4S] cluster site is built by cysteine 58, cysteine 61, cysteine 64, cysteine 68, cysteine 97, cysteine 100, cysteine 103, and cysteine 107.

Belongs to the complex I 23 kDa subunit family. As to quaternary structure, NDH-1 is composed of 14 different subunits. Subunits NuoA, H, J, K, L, M, N constitute the membrane sector of the complex. The cofactor is [4Fe-4S] cluster.

Its subcellular location is the cell inner membrane. The enzyme catalyses a quinone + NADH + 5 H(+)(in) = a quinol + NAD(+) + 4 H(+)(out). NDH-1 shuttles electrons from NADH, via FMN and iron-sulfur (Fe-S) centers, to quinones in the respiratory chain. The immediate electron acceptor for the enzyme in this species is believed to be ubiquinone. Couples the redox reaction to proton translocation (for every two electrons transferred, four hydrogen ions are translocated across the cytoplasmic membrane), and thus conserves the redox energy in a proton gradient. The chain is NADH-quinone oxidoreductase subunit I 2 from Syntrophobacter fumaroxidans (strain DSM 10017 / MPOB).